Consider the following 393-residue polypeptide: Lipid-A-disaccharide synthase (393 aa).

Belongs to the LpxB family.

It catalyses the reaction a lipid X + a UDP-2-N,3-O-bis[(3R)-3-hydroxyacyl]-alpha-D-glucosamine = a lipid A disaccharide + UDP + H(+). It participates in bacterial outer membrane biogenesis; LPS lipid A biosynthesis. Functionally, condensation of UDP-2,3-diacylglucosamine and 2,3-diacylglucosamine-1-phosphate to form lipid A disaccharide, a precursor of lipid A, a phosphorylated glycolipid that anchors the lipopolysaccharide to the outer membrane of the cell. This Rhodopseudomonas palustris (strain ATCC BAA-98 / CGA009) protein is Lipid-A-disaccharide synthase.